A 405-amino-acid chain; its full sequence is MSSSVKTPALEELVPGSEEKPKGRSPLSWGSLFGHRSEKIVFAKSDGGTDENVLTVTITETTVIESDLGVWSSRALLYLTLWFFFSFCTLFLNKYILSLLGGEPSMLGAVQMLSTTVIGCVKTLVPCCLYQHKARLSYPPNFLMTMLFVGLMRFATVVLGLVSLKNVAVSFAETVKSSAPIFTVIMSRMILGEYTGLLVNLSLIPVMGGLALCTATEISFNVLGFSAALSTNIMDCLQNVFSKKLLSGDKYRFSAPELQFYTSAAAVAMLVPARVFFTDVPVIGRSGKSFSYNQDVVLLLLTDGVLFHLQSVTAYALMGKISPVTFSVASTVKHALSIWLSVIVFGNKITSLSAVGTALVTVGVLLYNKARQHQQEALQSLAAATGRAPDDTVEPLLPQDPRQHP.

A disordered region spans residues 1–28 (MSSSVKTPALEELVPGSEEKPKGRSPLS). The next 10 helical transmembrane spans lie at 81–101 (LWFF…SLLG), 106–126 (MLGA…TLVP), 142–162 (FLMT…LGLV), 167–187 (VAVS…VIMS), 195–215 (TGLL…LCTA), 219–241 (SFNV…QNVF), 264–284 (AAAV…PVIG), 296–316 (VVLL…TAYA), 326–346 (FSVA…IVFG), and 347–367 (NKIT…VLLY). The interval 380-405 (SLAAATGRAPDDTVEPLLPQDPRQHP) is disordered.

This sequence belongs to the TPT transporter family. SLC35E subfamily.

It is found in the membrane. In terms of biological role, putative transporter. This chain is Solute carrier family 35 member E2B (SLC35E2B), found in Homo sapiens (Human).